The sequence spans 506 residues: 2-isopropylmalate synthase (506 aa).

A Pyruvate carboxyltransferase domain is found at 4 to 266; that stretch reads ILFMDTTLRD…QSSIILKEIK (263 aa). Mn(2+)-binding residues include D13, H201, H203, and N237. A regulatory domain region spans residues 390-506; the sequence is NIKQLQVHFV…KLKALLTLVK (117 aa).

Belongs to the alpha-IPM synthase/homocitrate synthase family. LeuA type 1 subfamily. As to quaternary structure, homodimer. It depends on Mn(2+) as a cofactor.

The protein resides in the cytoplasm. The catalysed reaction is 3-methyl-2-oxobutanoate + acetyl-CoA + H2O = (2S)-2-isopropylmalate + CoA + H(+). Its pathway is amino-acid biosynthesis; L-leucine biosynthesis; L-leucine from 3-methyl-2-oxobutanoate: step 1/4. Its function is as follows. Catalyzes the condensation of the acetyl group of acetyl-CoA with 3-methyl-2-oxobutanoate (2-ketoisovalerate) to form 3-carboxy-3-hydroxy-4-methylpentanoate (2-isopropylmalate). This is 2-isopropylmalate synthase from Bacillus cytotoxicus (strain DSM 22905 / CIP 110041 / 391-98 / NVH 391-98).